We begin with the raw amino-acid sequence, 296 residues long: Aquaporin NIP1-1 (296 aa).

Position 1 is an N-acetylmethionine (Met1). 2 helical membrane passes run 57–77 (LIAE…SVVV) and 84–104 (VVTL…LIYS). The short motif at 114-116 (NPA) is the NPA 1 element. The next 3 membrane-spanning stretches (helical) occupy residues 136–156 (VISQ…LFGL), 180–200 (AFTM…GVAT), and 205–225 (IGEL…LIAA). The NPA 2 motif lies at 233 to 235 (NPG). Residues 249–269 (GIWIYLVAPTLGAIAGAWVYN) form a helical membrane-spanning segment. Position 286 is a phosphoserine (Ser286).

The protein belongs to the MIP/aquaporin (TC 1.A.8) family. NIP (TC 1.A.8.12) subfamily. As to expression, expressed in roots.

The protein resides in the membrane. Water channel probably required to promote glycerol permeability and water transport across cell membranes. The protein is Aquaporin NIP1-1 (NIP1-1) of Arabidopsis thaliana (Mouse-ear cress).